A 234-amino-acid chain; its full sequence is Large ribosomal subunit protein uL1 (234 aa).

This sequence belongs to the universal ribosomal protein uL1 family. In terms of assembly, part of the 50S ribosomal subunit.

Its function is as follows. Binds directly to 23S rRNA. The L1 stalk is quite mobile in the ribosome, and is involved in E site tRNA release. Protein L1 is also a translational repressor protein, it controls the translation of the L11 operon by binding to its mRNA. The protein is Large ribosomal subunit protein uL1 of Salmonella arizonae (strain ATCC BAA-731 / CDC346-86 / RSK2980).